The primary structure comprises 516 residues: uncharacterized protein (516 aa).

An N-terminal signal peptide occupies residues methionine 1–threonine 17. Disordered stretches follow at residues lysine 29–arginine 197 and arginine 296–leucine 426. A compositionally biased stretch (basic and acidic residues) spans arginine 71–serine 85. Residues valine 122–serine 144 are compositionally biased toward pro residues. A compositionally biased stretch (low complexity) spans proline 145–valine 155. A compositionally biased stretch (basic and acidic residues) spans lysine 351–proline 367. Low complexity predominate over residues serine 394–proline 406. Residues alanine 415–leucine 426 show a composition bias toward basic and acidic residues.

This is an uncharacterized protein from Treponema pallidum (strain Nichols).